Consider the following 226-residue polypeptide: MAAILELVEIERHFFESHKPLIILDKANFILNRGELVALVAPSGAGKSTLLHIAGLLEKPTAGDVILRGVSCAKRSDNERTAIRRNDIGFVYQFHHLLPEFTALENIIIPQMIAGFKKSIAEDRALKLLTYLRVSHRANHRPSELSGGEQQRVAIARAVANGPSVLLADEPTGNLDPVTSAYVFQALSALVRQSGLSALIATHNYGLAKQMHRRITLKEKKIVELP.

The region spanning 5 to 225 is the ABC transporter domain; the sequence is LELVEIERHF…TLKEKKIVEL (221 aa). 41–48 contacts ATP; that stretch reads APSGAGKS.

Belongs to the ABC transporter superfamily. Lipoprotein translocase (TC 3.A.1.125) family. As to quaternary structure, the complex is composed of two ATP-binding proteins (LolD) and two transmembrane proteins (LolC and LolE).

The protein resides in the cell inner membrane. In terms of biological role, part of the ABC transporter complex LolCDE involved in the translocation of mature outer membrane-directed lipoproteins, from the inner membrane to the periplasmic chaperone, LolA. Responsible for the formation of the LolA-lipoprotein complex in an ATP-dependent manner. The polypeptide is Lipoprotein-releasing system ATP-binding protein LolD (Bartonella quintana (strain Toulouse) (Rochalimaea quintana)).